Consider the following 294-residue polypeptide: Cytidine deaminase (294 aa).

CMP/dCMP-type deaminase domains follow at residues 48-168 and 186-294; these read DEDA…FGPK and LTGD…VLLG. Position 89-91 (89-91) interacts with substrate; that stretch reads NME. Residue histidine 102 coordinates Zn(2+). The active-site Proton donor is glutamate 104. Residues cysteine 129 and cysteine 132 each coordinate Zn(2+).

It belongs to the cytidine and deoxycytidylate deaminase family. In terms of assembly, homodimer. Zn(2+) serves as cofactor.

The enzyme catalyses cytidine + H2O + H(+) = uridine + NH4(+). The catalysed reaction is 2'-deoxycytidine + H2O + H(+) = 2'-deoxyuridine + NH4(+). In terms of biological role, this enzyme scavenges exogenous and endogenous cytidine and 2'-deoxycytidine for UMP synthesis. The polypeptide is Cytidine deaminase (Salmonella arizonae (strain ATCC BAA-731 / CDC346-86 / RSK2980)).